The sequence spans 266 residues: Undecaprenyl-diphosphatase (266 aa).

The next 8 helical transmembrane spans lie at 1–21 (MDTF…FLPI), 39–59 (QGLS…VIYF), 87–107 (WWII…KDFI), 111–131 (LRSA…LWWA), 149–169 (ALLI…RSGA), 183–203 (AAAR…AILV), 218–238 (ALTL…HYFL), and 246–266 (MTPF…FIFL).

This sequence belongs to the UppP family.

It is found in the cell inner membrane. It catalyses the reaction di-trans,octa-cis-undecaprenyl diphosphate + H2O = di-trans,octa-cis-undecaprenyl phosphate + phosphate + H(+). Catalyzes the dephosphorylation of undecaprenyl diphosphate (UPP). Confers resistance to bacitracin. The protein is Undecaprenyl-diphosphatase of Shewanella sp. (strain MR-4).